The sequence spans 735 residues: Phosphoribosylformylglycinamidine synthase subunit PurL (735 aa).

His49 is a catalytic residue. Residues Tyr52 and Lys91 each contribute to the ATP site. Position 93 (Glu93) interacts with Mg(2+). Substrate-binding positions include 94–97 (SHNH) and Arg116. The Proton acceptor role is filled by His95. Mg(2+) is bound at residue Asp117. A substrate-binding site is contributed by Gln240. Asp268 is a binding site for Mg(2+). 312 to 314 (ESQ) is a binding site for substrate. ATP contacts are provided by Asp493 and Gly530. Mg(2+) is bound at residue Asn531. Residue Ser533 coordinates substrate.

The protein belongs to the FGAMS family. Monomer. Part of the FGAM synthase complex composed of 1 PurL, 1 PurQ and 2 PurS subunits.

The protein resides in the cytoplasm. It catalyses the reaction N(2)-formyl-N(1)-(5-phospho-beta-D-ribosyl)glycinamide + L-glutamine + ATP + H2O = 2-formamido-N(1)-(5-O-phospho-beta-D-ribosyl)acetamidine + L-glutamate + ADP + phosphate + H(+). Its pathway is purine metabolism; IMP biosynthesis via de novo pathway; 5-amino-1-(5-phospho-D-ribosyl)imidazole from N(2)-formyl-N(1)-(5-phospho-D-ribosyl)glycinamide: step 1/2. Its function is as follows. Part of the phosphoribosylformylglycinamidine synthase complex involved in the purines biosynthetic pathway. Catalyzes the ATP-dependent conversion of formylglycinamide ribonucleotide (FGAR) and glutamine to yield formylglycinamidine ribonucleotide (FGAM) and glutamate. The FGAM synthase complex is composed of three subunits. PurQ produces an ammonia molecule by converting glutamine to glutamate. PurL transfers the ammonia molecule to FGAR to form FGAM in an ATP-dependent manner. PurS interacts with PurQ and PurL and is thought to assist in the transfer of the ammonia molecule from PurQ to PurL. This Methylocella silvestris (strain DSM 15510 / CIP 108128 / LMG 27833 / NCIMB 13906 / BL2) protein is Phosphoribosylformylglycinamidine synthase subunit PurL.